A 1388-amino-acid chain; its full sequence is DNA-directed RNA polymerase subunit beta'' (1388 aa).

Zn(2+)-binding residues include Cys224, Cys294, Cys301, and Cys304.

Belongs to the RNA polymerase beta' chain family. RpoC2 subfamily. In plastids the minimal PEP RNA polymerase catalytic core is composed of four subunits: alpha, beta, beta', and beta''. When a (nuclear-encoded) sigma factor is associated with the core the holoenzyme is formed, which can initiate transcription. Zn(2+) serves as cofactor.

Its subcellular location is the plastid. The protein resides in the chloroplast. It catalyses the reaction RNA(n) + a ribonucleoside 5'-triphosphate = RNA(n+1) + diphosphate. In terms of biological role, DNA-dependent RNA polymerase catalyzes the transcription of DNA into RNA using the four ribonucleoside triphosphates as substrates. The polypeptide is DNA-directed RNA polymerase subunit beta'' (Phalaenopsis aphrodite subsp. formosana (Moth orchid)).